The chain runs to 284 residues: Bifunctional protein FolD (284 aa).

NADP(+) contacts are provided by residues 166-168 (GAS) and Ile232.

Belongs to the tetrahydrofolate dehydrogenase/cyclohydrolase family. Homodimer.

It catalyses the reaction (6R)-5,10-methylene-5,6,7,8-tetrahydrofolate + NADP(+) = (6R)-5,10-methenyltetrahydrofolate + NADPH. The catalysed reaction is (6R)-5,10-methenyltetrahydrofolate + H2O = (6R)-10-formyltetrahydrofolate + H(+). The protein operates within one-carbon metabolism; tetrahydrofolate interconversion. Its function is as follows. Catalyzes the oxidation of 5,10-methylenetetrahydrofolate to 5,10-methenyltetrahydrofolate and then the hydrolysis of 5,10-methenyltetrahydrofolate to 10-formyltetrahydrofolate. The sequence is that of Bifunctional protein FolD from Glaesserella parasuis serovar 5 (strain SH0165) (Haemophilus parasuis).